A 270-amino-acid chain; its full sequence is MRIALGIQYDGAAFCGWQSQPHGKTVQDALERALAEFAQTSLHTTVAGRTDTGVHGLGQVVHFDTDLDRADFSWVRGTNAFLPSTVAVQWAKPMPDTFHARFAAFERTYYYALYVHPVRSPMLAARAGWVHTPLDVDAMREAAEHLVGEHDFSAFRSSECQAKSPVKHLYQIGIRPDGDFIHFRFRANAFLHHMVRNLMGCLVAVGRGRYPASWLAEVLESRDRGCAAPTFMPEGLYLAHVGYPAEFAVPPAQLGSVPWSSVWADLDGRP.

Catalysis depends on Asp51, which acts as the Nucleophile. Tyr109 provides a ligand contact to substrate.

Belongs to the tRNA pseudouridine synthase TruA family. As to quaternary structure, homodimer.

It carries out the reaction uridine(38/39/40) in tRNA = pseudouridine(38/39/40) in tRNA. Formation of pseudouridine at positions 38, 39 and 40 in the anticodon stem and loop of transfer RNAs. The protein is tRNA pseudouridine synthase A of Burkholderia thailandensis (strain ATCC 700388 / DSM 13276 / CCUG 48851 / CIP 106301 / E264).